Here is a 468-residue protein sequence, read N- to C-terminus: Probable Xaa-Pro aminopeptidase PEPP (468 aa).

Asp264, Asp275, Glu398, and Glu438 together coordinate Mn(2+).

It belongs to the peptidase M24B family. Requires Mn(2+) as cofactor.

The catalysed reaction is Release of any N-terminal amino acid, including proline, that is linked to proline, even from a dipeptide or tripeptide.. Functionally, catalyzes the removal of a penultimate prolyl residue from the N-termini of peptides. This is Probable Xaa-Pro aminopeptidase PEPP (PEPP) from Paracoccidioides lutzii (strain ATCC MYA-826 / Pb01) (Paracoccidioides brasiliensis).